Here is a 511-residue protein sequence, read N- to C-terminus: Phosphoenolpyruvate carboxylase (511 aa).

This sequence belongs to the PEPCase type 2 family. Homotetramer. Mg(2+) serves as cofactor.

The enzyme catalyses oxaloacetate + phosphate = phosphoenolpyruvate + hydrogencarbonate. Its function is as follows. Catalyzes the irreversible beta-carboxylation of phosphoenolpyruvate (PEP) to form oxaloacetate (OAA), a four-carbon dicarboxylic acid source for the tricarboxylic acid cycle. This is Phosphoenolpyruvate carboxylase from Saccharolobus islandicus (strain Y.G.57.14 / Yellowstone #1) (Sulfolobus islandicus).